Here is a 210-residue protein sequence, read N- to C-terminus: Histone H1A (210 aa).

Disordered stretches follow at residues 1-49 (MAEA…VSEQ) and 101-210 (KGSG…PKKK). Composition is skewed to low complexity over residues 26 to 45 (KKAA…SGPS) and 129 to 142 (PLAA…AAAK). One can recognise an H15 domain in the interval 42–113 (SGPSVSEQIV…GASGSFKLNK (72 aa)). Composition is skewed to basic residues over residues 143-153 (KTAKSPKKPKK) and 160-180 (SPKK…KTAV). Positions 181–192 (KPKVAAKSPAKA) are enriched in low complexity. Residues 193–210 (KAAKPKVAKAKKAAPKKK) are compositionally biased toward basic residues.

This sequence belongs to the histone H1/H5 family.

It is found in the nucleus. The protein resides in the chromosome. Functionally, histones H1 are necessary for the condensation of nucleosome chains into higher-order structures. This Xenopus laevis (African clawed frog) protein is Histone H1A.